Consider the following 336-residue polypeptide: 3-isopropylmalate dehydrogenase (336 aa).

Substrate-binding residues include arginine 87, arginine 97, arginine 121, and aspartate 211. Aspartate 211, aspartate 235, and aspartate 239 together coordinate Mg(2+). Glycine 271–aspartate 283 is a binding site for NAD(+).

It belongs to the isocitrate and isopropylmalate dehydrogenases family. LeuB type 2 subfamily. Homodimer. Mg(2+) serves as cofactor. It depends on Mn(2+) as a cofactor.

The protein resides in the cytoplasm. It catalyses the reaction (2R,3S)-3-isopropylmalate + NAD(+) = 4-methyl-2-oxopentanoate + CO2 + NADH. It participates in amino-acid biosynthesis; L-leucine biosynthesis; L-leucine from 3-methyl-2-oxobutanoate: step 3/4. Catalyzes the oxidation of 3-carboxy-2-hydroxy-4-methylpentanoate (3-isopropylmalate) to 3-carboxy-4-methyl-2-oxopentanoate. The product decarboxylates to 4-methyl-2 oxopentanoate. The polypeptide is 3-isopropylmalate dehydrogenase (Mycolicibacterium vanbaalenii (strain DSM 7251 / JCM 13017 / BCRC 16820 / KCTC 9966 / NRRL B-24157 / PYR-1) (Mycobacterium vanbaalenii)).